The following is a 728-amino-acid chain: 1,4-alpha-glucan branching enzyme GlgB (728 aa).

The Nucleophile role is filled by Asp405. Glu458 serves as the catalytic Proton donor. A disordered region spans residues 686 to 712 (YHGSNAGNAGAVQSDEHESHGRPHSLS).

It belongs to the glycosyl hydrolase 13 family. GlgB subfamily. Monomer.

It carries out the reaction Transfers a segment of a (1-&gt;4)-alpha-D-glucan chain to a primary hydroxy group in a similar glucan chain.. It functions in the pathway glycan biosynthesis; glycogen biosynthesis. Functionally, catalyzes the formation of the alpha-1,6-glucosidic linkages in glycogen by scission of a 1,4-alpha-linked oligosaccharide from growing alpha-1,4-glucan chains and the subsequent attachment of the oligosaccharide to the alpha-1,6 position. This Enterobacter sp. (strain 638) protein is 1,4-alpha-glucan branching enzyme GlgB.